The following is a 450-amino-acid chain: uncharacterized protein (450 aa).

Positions 387 to 416 (ELDEKNNNKEENKNQDLHEPKESSSEDLLK) are enriched in basic and acidic residues. The disordered stretch occupies residues 387-439 (ELDEKNNNKEENKNQDLHEPKESSSEDLLKRLNNLKINTNEGPVQDNENHDNE).

This is an uncharacterized protein from Saccharomyces cerevisiae (strain ATCC 204508 / S288c) (Baker's yeast).